A 208-amino-acid chain; its full sequence is Large ribosomal subunit protein uL4 (208 aa).

A disordered region spans residues 45-89 (RQGTHAHKNRSAVSGGGKKPWRQKGTGRARQGSTRSPQWRGGGTV).

This sequence belongs to the universal ribosomal protein uL4 family. In terms of assembly, part of the 50S ribosomal subunit.

One of the primary rRNA binding proteins, this protein initially binds near the 5'-end of the 23S rRNA. It is important during the early stages of 50S assembly. It makes multiple contacts with different domains of the 23S rRNA in the assembled 50S subunit and ribosome. Functionally, forms part of the polypeptide exit tunnel. This Lactococcus lactis subsp. cremoris (strain SK11) protein is Large ribosomal subunit protein uL4.